The sequence spans 716 residues: uncharacterized protein (716 aa).

Disordered stretches follow at residues 84–103 and 153–189; these read SPSI…ERYP and VTDE…SQGQ. Ser-97 carries the phosphoserine modification. Residues Lys-201, Lys-204, Lys-237, Lys-283, and Lys-626 each participate in a glycyl lysine isopeptide (Lys-Gly) (interchain with G-Cter in SUMO2) cross-link.

This is an uncharacterized protein from Mus musculus (Mouse).